A 96-amino-acid chain; its full sequence is Large ribosomal subunit protein eL14 (96 aa).

The protein belongs to the eukaryotic ribosomal protein eL14 family.

This is Large ribosomal subunit protein eL14 from Saccharolobus solfataricus (strain ATCC 35092 / DSM 1617 / JCM 11322 / P2) (Sulfolobus solfataricus).